We begin with the raw amino-acid sequence, 257 residues long: Imidazole glycerol phosphate synthase subunit HisF (257 aa).

Catalysis depends on residues aspartate 12 and aspartate 131.

The protein belongs to the HisA/HisF family. As to quaternary structure, heterodimer of HisH and HisF.

The protein localises to the cytoplasm. It carries out the reaction 5-[(5-phospho-1-deoxy-D-ribulos-1-ylimino)methylamino]-1-(5-phospho-beta-D-ribosyl)imidazole-4-carboxamide + L-glutamine = D-erythro-1-(imidazol-4-yl)glycerol 3-phosphate + 5-amino-1-(5-phospho-beta-D-ribosyl)imidazole-4-carboxamide + L-glutamate + H(+). Its pathway is amino-acid biosynthesis; L-histidine biosynthesis; L-histidine from 5-phospho-alpha-D-ribose 1-diphosphate: step 5/9. Functionally, IGPS catalyzes the conversion of PRFAR and glutamine to IGP, AICAR and glutamate. The HisF subunit catalyzes the cyclization activity that produces IGP and AICAR from PRFAR using the ammonia provided by the HisH subunit. The chain is Imidazole glycerol phosphate synthase subunit HisF from Nocardia farcinica (strain IFM 10152).